The chain runs to 439 residues: C4-dicarboxylate transport protein (439 aa).

The next 9 helical transmembrane spans lie at 10-30 (LYVQ…FYPP), 45-65 (LIKM…IAGM), 77-97 (LALL…LVLV), 145-165 (AFAK…GFAL), 185-205 (VLFA…FGAM), 223-243 (LMGT…GTIT), 290-310 (VVGL…AIYL), 332-352 (TLLA…GSGF), and 353-373 (IVLA…LALI). The interval 415 to 439 (LNGQTAEEASAPQALPDRMESRIHH) is disordered.

It belongs to the dicarboxylate/amino acid:cation symporter (DAACS) (TC 2.A.23) family.

Its subcellular location is the cell inner membrane. In terms of biological role, responsible for the transport of dicarboxylates such as succinate, fumarate, and malate from the periplasm across the membrane. This chain is C4-dicarboxylate transport protein, found in Verminephrobacter eiseniae (strain EF01-2).